A 349-amino-acid chain; its full sequence is Isopentenyl-diphosphate delta-isomerase (349 aa).

Substrate is bound at residue 9–10 (RK). FMN is bound by residues 65 to 67 (AMT), S95, and N124. 95–97 (STH) contributes to the substrate binding site. Q154 is a substrate binding site. Residue E155 participates in Mg(2+) binding. FMN-binding positions include K186, S211, T216, 262 to 264 (GLR), and 283 to 284 (SR).

It belongs to the IPP isomerase type 2 family. Homooctamer. Dimer of tetramers. The cofactor is FMN. NADPH serves as cofactor. Mg(2+) is required as a cofactor.

It localises to the cytoplasm. It carries out the reaction isopentenyl diphosphate = dimethylallyl diphosphate. Its function is as follows. Involved in the biosynthesis of isoprenoids. Catalyzes the 1,3-allylic rearrangement of the homoallylic substrate isopentenyl (IPP) to its allylic isomer, dimethylallyl diphosphate (DMAPP). This chain is Isopentenyl-diphosphate delta-isomerase, found in Staphylococcus epidermidis (strain ATCC 35984 / DSM 28319 / BCRC 17069 / CCUG 31568 / BM 3577 / RP62A).